We begin with the raw amino-acid sequence, 212 residues long: Transmembrane protein 65 (212 aa).

Topologically, residues 1-88 are cytoplasmic; that stretch reads MIRSVLLRAL…SRLTAAQLRY (88 aa). The helical transmembrane segment at 89 to 109 threads the bilayer; that stretch reads ILLHNAIPFIGFGFLDNAIMI. Residues 110–116 lie on the Extracellular side of the membrane; sequence AAGTQIE. Residues 117 to 137 traverse the membrane as a helical segment; the sequence is LSIGLTLGISTMAAAALGNLV. The Cytoplasmic segment spans residues 138-139; it reads SD. A helical membrane pass occupies residues 140–160; the sequence is LAGLGLAGYVEALAVRLGMQI. The Extracellular portion of the chain corresponds to 161 to 178; that stretch reads PDLSPRQVDMWQTRVSSH. A helical transmembrane segment spans residues 179 to 199; it reads MGKAIGVAIGCILGMFPLLFL. At 200-212 the chain is on the cytoplasmic side; the sequence is SDEEDKKPKKDSN.

As to quaternary structure, monomer. Homodimer. Interacts with GJA1. In terms of tissue distribution, expression is restricted to the heart (at protein level).

It localises to the cell membrane. The protein localises to the mitochondrion inner membrane. Essential for maintaining proper cardiac intercalated disk (ICD) structure and function. May regulate cardiac conduction and the function of the gap junction protein GJA1. May contribute to the stability and proper localization of GJA1 to cardiac intercalated disk thereby regulating gap junction communication. Regulates mitochondrial respiration and mitochondrial DNA copy number maintenance. The chain is Transmembrane protein 65 (tmem65) from Danio rerio (Zebrafish).